Consider the following 260-residue polypeptide: Serine protease VLSP-1 (260 aa).

Residues 1-18 form the signal peptide; the sequence is MVLIRVLANLLVLHLSYA. Residues 19-24 constitute a propeptide that is removed on maturation; that stretch reads QKSSEL. The Peptidase S1 domain maps to 25-251; it reads VIGGDECNIN…YSDWIQSIIA (227 aa). 6 disulfide bridges follow: C31-C165, C52-C68, C100-C258, C144-C212, C176-C191, and C202-C227. A glycan (N-linked (GlcNAc...) asparagine) is linked at N44. The Charge relay system role is filled by H67. N-linked (GlcNAc...) asparagine glycosylation occurs at N103. The Charge relay system role is filled by D112. N156 carries N-linked (GlcNAc...) asparagine glycosylation. The active-site Charge relay system is S206.

This sequence belongs to the peptidase S1 family. Snake venom subfamily. In terms of tissue distribution, expressed by the venom gland.

The protein localises to the secreted. In terms of biological role, snake venom serine protease that may act in the hemostasis system of the prey. This chain is Serine protease VLSP-1, found in Macrovipera lebetinus (Levantine viper).